Consider the following 475-residue polypeptide: Aspartyl/glutamyl-tRNA(Asn/Gln) amidotransferase subunit B (475 aa).

It belongs to the GatB/GatE family. GatB subfamily. Heterotrimer of A, B and C subunits.

It catalyses the reaction L-glutamyl-tRNA(Gln) + L-glutamine + ATP + H2O = L-glutaminyl-tRNA(Gln) + L-glutamate + ADP + phosphate + H(+). It carries out the reaction L-aspartyl-tRNA(Asn) + L-glutamine + ATP + H2O = L-asparaginyl-tRNA(Asn) + L-glutamate + ADP + phosphate + 2 H(+). Its function is as follows. Allows the formation of correctly charged Asn-tRNA(Asn) or Gln-tRNA(Gln) through the transamidation of misacylated Asp-tRNA(Asn) or Glu-tRNA(Gln) in organisms which lack either or both of asparaginyl-tRNA or glutaminyl-tRNA synthetases. The reaction takes place in the presence of glutamine and ATP through an activated phospho-Asp-tRNA(Asn) or phospho-Glu-tRNA(Gln). The polypeptide is Aspartyl/glutamyl-tRNA(Asn/Gln) amidotransferase subunit B (Hydrogenovibrio crunogenus (strain DSM 25203 / XCL-2) (Thiomicrospira crunogena)).